A 465-amino-acid chain; its full sequence is Sensor histidine kinase ZraS (465 aa).

Residues 1 to 14 lie on the Cytoplasmic side of the membrane; the sequence is MRFMQRSKDSLAKW. Residues 15-35 form a helical membrane-spanning segment; the sequence is LSAILPVVIVGLVGLFAVTVI. At 36-201 the chain is on the periplasmic side; the sequence is RDYGRASEAD…ATQSGEKRNT (166 aa). Residues 202–222 traverse the membrane as a helical segment; it reads LIILFALATVLLASVLSFFWY. Topologically, residues 223-465 are cytoplasmic; sequence RRYLRSRQLL…VNITRKDPQG (243 aa). Residues 251–458 form the Histidine kinase domain; sequence GVAHEIRNPL…TFTLWLPVNI (208 aa). Histidine 254 is subject to Phosphohistidine; by autocatalysis.

In terms of processing, autophosphorylated.

The protein localises to the cell inner membrane. The catalysed reaction is ATP + protein L-histidine = ADP + protein N-phospho-L-histidine.. Its activity is regulated as follows. Activity of the ZraS/ZraR two-component system is repressed by the zinc-bound form of ZraP, which probably interacts with the periplasmic region of ZraS. In terms of biological role, part of the Zra signaling pathway, an envelope stress response (ESR) system composed of the periplasmic accessory protein ZraP, the histidine kinase ZraS and the transcriptional regulator ZraR. The ZraPSR system contributes to antibiotic resistance and is important for membrane integrity in the presence of membrane-targeting biocides. ZraS is a member of the two-component regulatory system ZraS/ZraR. Functions as a membrane-associated sensor kinase that phosphorylates ZraR in response to high concentrations of Zn(2+) or Pb(2+) in the medium. Binds one zinc molecule with high affinity via its periplasmic domain, inducing a conformational change that is transmitted to the histidine kinase domain and leads to the activation of ZraR. The system has no direct role in zinc or copper resistance. The polypeptide is Sensor histidine kinase ZraS (Escherichia coli (strain K12)).